The sequence spans 124 residues: S-adenosylmethionine decarboxylase proenzyme (124 aa).

Ser-63 serves as the catalytic Schiff-base intermediate with substrate; via pyruvic acid. Ser-63 carries the pyruvic acid (Ser); by autocatalysis modification. His-68 serves as the catalytic Proton acceptor; for processing activity. Catalysis depends on Cys-83, which acts as the Proton donor; for catalytic activity.

This sequence belongs to the prokaryotic AdoMetDC family. Type 1 subfamily. Heterotetramer of two alpha and two beta chains arranged as a dimer of alpha/beta heterodimers. Pyruvate serves as cofactor. Post-translationally, is synthesized initially as an inactive proenzyme. Formation of the active enzyme involves a self-maturation process in which the active site pyruvoyl group is generated from an internal serine residue via an autocatalytic post-translational modification. Two non-identical subunits are generated from the proenzyme in this reaction, and the pyruvate is formed at the N-terminus of the alpha chain, which is derived from the carboxyl end of the proenzyme. The post-translation cleavage follows an unusual pathway, termed non-hydrolytic serinolysis, in which the side chain hydroxyl group of the serine supplies its oxygen atom to form the C-terminus of the beta chain, while the remainder of the serine residue undergoes an oxidative deamination to produce ammonia and the pyruvoyl group blocking the N-terminus of the alpha chain.

It carries out the reaction S-adenosyl-L-methionine + H(+) = S-adenosyl 3-(methylsulfanyl)propylamine + CO2. Its pathway is amine and polyamine biosynthesis; S-adenosylmethioninamine biosynthesis; S-adenosylmethioninamine from S-adenosyl-L-methionine: step 1/1. In terms of biological role, catalyzes the decarboxylation of S-adenosylmethionine to S-adenosylmethioninamine (dcAdoMet), the propylamine donor required for the synthesis of the polyamines spermine and spermidine from the diamine putrescine. This Caldanaerobacter subterraneus subsp. tengcongensis (strain DSM 15242 / JCM 11007 / NBRC 100824 / MB4) (Thermoanaerobacter tengcongensis) protein is S-adenosylmethionine decarboxylase proenzyme.